The following is a 260-amino-acid chain: Putative [LysW]-aminoadipate/[LysW]-glutamate kinase (260 aa).

Substrate-binding positions include 35–36 (GG), arginine 62, and asparagine 162.

Belongs to the acetylglutamate kinase family. LysZ subfamily.

Its subcellular location is the cytoplasm. The enzyme catalyses [amino-group carrier protein]-C-terminal-N-(1,4-dicarboxybutan-1-yl)-L-glutamine + ATP = [amino-group carrier protein]-C-terminal-N-(1-carboxy-5-phosphooxy-5-oxopentan-1-yl)-L-glutamine + ADP. The catalysed reaction is [amino-group carrier protein]-C-terminal-gamma-(L-glutamyl)-L-glutamate + ATP = [amino-group carrier protein]-C-terminal-gamma-(5-phospho-L-glutamyl)-L-glutamate + ADP. The protein operates within amino-acid biosynthesis; L-lysine biosynthesis via AAA pathway; L-lysine from L-alpha-aminoadipate (Thermus route): step 2/5. It functions in the pathway amino-acid biosynthesis; L-arginine biosynthesis. Involved in both the arginine and lysine biosynthetic pathways. Phosphorylates the LysW-bound precursors glutamate (for arginine biosynthesis), respectively alpha-aminoadipate (for lysine biosynthesis). The chain is Putative [LysW]-aminoadipate/[LysW]-glutamate kinase from Pyrobaculum neutrophilum (strain DSM 2338 / JCM 9278 / NBRC 100436 / V24Sta) (Thermoproteus neutrophilus).